Here is a 445-residue protein sequence, read N- to C-terminus: MKVKVLCRNPDDYVRETKRDLQRVPRNYDPALHPFEVSREYTRALNATKLERVFAKPFIASLDGHRDGVNCIAKHPKSLSTVLSGACDGEVKIWNLTKRECSRTIQAHDGFVRGLCVRFCGTSFFTVGDDKTVKQWAMESPGYGEKVEPMRTILGKTVFTGIDHHVKDAVFATCGQQVDIWDEQRSAPMRSYAWGVDSISSVRFNPVETHILSSCGTDRSIVLYDKRKPTPLKKIILEMRTNALCWNPMEAFIFTAANENFNLYTYDMRYMDSPVKVHMDHVSAVLDVDYSPTGKELVSASFDKSIRIFPVQSGHSREVYHTKRMQHVTCVRWSADNKYVLCGSDEMNIRIWKANASEKLGVLSPRERAAQNYNQKLKEKFQHHPQIKRIARHRHLPRSIYSQIKEQQIMREARRKKDVNRRKHSKPGSVPIPSEKKKHVLAVVE.

WD repeat units lie at residues Gly64–Thr104, Ala107–Lys146, Thr152–Ser191, Trp194–Lys234, Ile236–Lys276, Asp280–Val319, and Lys323–Val362. Positions Lys353–Leu441 are required for nucleolar location. 2 stretches are compositionally biased toward basic residues: residues Ala413–Lys426 and Lys436–Glu445. Positions Ala413–Glu445 are disordered.

The protein belongs to the WD repeat DCAF13/WDSOF1 family. Part of the small subunit (SSU) processome, composed of more than 70 proteins and the RNA chaperone small nucleolar RNA (snoRNA) U3. Component of the DCX(DCAF13) E3 ubiquitin ligase complex, at least composed of CUL4 (CUL4A or CUL4B), DDB1, DCAF13 and RBX1.

It localises to the nucleus. The protein resides in the nucleolus. It functions in the pathway protein modification; protein ubiquitination. Part of the small subunit (SSU) processome, first precursor of the small eukaryotic ribosomal subunit. During the assembly of the SSU processome in the nucleolus, many ribosome biogenesis factors, an RNA chaperone and ribosomal proteins associate with the nascent pre-rRNA and work in concert to generate RNA folding, modifications, rearrangements and cleavage as well as targeted degradation of pre-ribosomal RNA by the RNA exosome. In terms of biological role, substrate-recognition component of a DCX (DDB1-CUL4-X-box) E3 ubiquitin-protein ligase complex. The polypeptide is DDB1- and CUL4-associated factor 13 (dcaf13) (Xenopus laevis (African clawed frog)).